A 1381-amino-acid polypeptide reads, in one-letter code: MKALAVLGPGLLVHLLTLVQKSGGECKEALVKSAMNVDMKYQLPNFTAETPIQNVVVHQHYIYLGAVNYIYVLNDTDLQKVAEYRTGPVLEHPECLPCQDCSHKANASGGVWADNVNMALLVDTYYDDQLISCGSVRRGTCRRHVLRSDAADIRSEVHCMFSPQADEEPGRCPDCVVSALGTKVLLSEKDRFINFFVGNTISSAHLPGRALHSISVRRLKETQDGFKFLTDQSYIDVLPEFRDSYPIKYVHAFESNHFIYFLTVQRETLDAQTFHTRIVRFCSVDSGLHSYVEMPLECILTEKRRRRSARSEVFNILQAAYVGKPGTHLANQIGVNLDDDILYAVFAQSKPDSAEPMNRSAVCAFPIKLVNEFFNKIVNKNNVRCLQHFYGPNHEPCFNRTLLRIPSGCEVRSDEYRTEFTTALQRVDLFMGQFNRVLLTSVSTFIAGDLTIANLGTSEGRFMQVVVFRSGSSTPHVNFRLDSHPVSPEMIVQHPLNQNGYTLVVTGKTITKIPLNGLGCEHFQSCSQCLSAPPFVQCGWCHNKCVRSEECPSGVWTQDVCHPTIYEVFPTTAPLEGGTTLTICGWDFGFRRNNKFDLKKTRILLGNESCTLTLSESTANTLKCTVGPAMSEHLNLSIIISSGRGTAQYTAFSYVDPIITSVSPSYGPKTGGTLLTLTGKYLNSGNSRHISIGGKTCSLKSVSESVLECYTPAQTTTTEFPIKLKIDLANRETNSFNYREDPIVDEIHPTKSFISGGSTITGVGKNLNSVSGLRMVISVREAGRNFTVACQHRSNSEIICCTTPSLQQLNLQLPLTTKAFFMLDGIHSKYFDLIYVHDPVFKLFEKPVMISIGNENVLEIKGNDIDPEAVKGEVLKVGNKSCENVHSHSEAVLCTVPSDLLKLNSELNIEWKQAVSSTILGKVIVQPDQNFTGLIVGVISISVLLSLLFGLFLWLKRRKQIKDLGSELVRYDARIHTPHLDRLVSARSISPTTEMVSNESVDYRATFPEDQFANSSQNGSCRQVQCPLMDLSPILPGGDSDISSPLLQNTVRIDLSALNPELVQAVQHVVIGPSRLIVHFNEVIGRGHFGCVYHGTLLDNDDKKIHCAVKSLNRITDIGEVSQFLTEGIIMKDFSHPNVLSLLGICLRSEGSPLVVLPYMKHGDLRNFIRNETHNPTVKDLIGFGLQVAKGMKYLASKKFVHRDLAARNCMLDENFTVKVADFGLARDVYDKEYYSVHNKTGAKLPVKWMALESLQTQKFTTKSDVWSFGVLLWELMTRGAPPYPDVNTFDITVYLLQGRRLLQPEYCPDHLYEVMLKCWHPKAEQRPSFAELVSRISAIFSAFIGEHYVHVNATYVNVKCVAPYPCLLSSQDHVDGEGDT.

The N-terminal stretch at 1–24 (MKALAVLGPGLLVHLLTLVQKSGG) is a signal peptide. The Extracellular segment spans residues 25–932 (ECKEALVKSA…VIVQPDQNFT (908 aa)). The region spanning 27 to 515 (KEALVKSAMN…TGKTITKIPL (489 aa)) is the Sema domain. N-linked (GlcNAc...) asparagine glycosylation is found at asparagine 45 and asparagine 74. Disulfide bonds link cysteine 95/cysteine 101, cysteine 98/cysteine 159, cysteine 133/cysteine 141, cysteine 172/cysteine 175, cysteine 298/cysteine 363, and cysteine 385/cysteine 397. Asparagine 106 carries N-linked (GlcNAc...) asparagine glycosylation. Residue asparagine 358 is glycosylated (N-linked (GlcNAc...) asparagine). An N-linked (GlcNAc...) asparagine glycan is attached at asparagine 399. 4 disulfide bridges follow: cysteine 520–cysteine 538, cysteine 526–cysteine 561, cysteine 529–cysteine 545, and cysteine 541–cysteine 551. 3 consecutive IPT/TIG domains span residues 563–655 (PTIY…FSYV), 657–739 (PIIT…FNYR), and 742–836 (PIVD…LIYV). O-linked (Man) threonine glycosylation occurs at threonine 582. N-linked (GlcNAc...) asparagine glycosylation is found at asparagine 607 and asparagine 635. 2 O-linked (Man) threonine glycosylation sites follow: threonine 676 and threonine 761. Residues asparagine 785, asparagine 879, and asparagine 930 are each glycosylated (N-linked (GlcNAc...) asparagine). A helical transmembrane segment spans residues 933–955 (GLIVGVISISVLLSLLFGLFLWL). The Cytoplasmic portion of the chain corresponds to 956-1381 (KRRKQIKDLG…QDHVDGEGDT (426 aa)). The residue at position 966 (serine 966) is a Phosphoserine. Threonine 977 bears the Phosphothreonine mark. Phosphoserine occurs at positions 990, 997, and 1000. At tyrosine 1003 the chain carries Phosphotyrosine. In terms of domain architecture, Protein kinase spans 1078–1345 (VHFNEVIGRG…RISAIFSAFI (268 aa)). ATP contacts are provided by residues 1084–1092 (IGRGHFGCV) and lysine 1110. Catalysis depends on aspartate 1204, which acts as the Proton acceptor. The interaction with RANBP9 stretch occupies residues 1212–1381 (LDENFTVKVA…QDHVDGEGDT (170 aa)). Tyrosine 1230 carries the phosphotyrosine modification. Phosphotyrosine; by autocatalysis is present on residues tyrosine 1234 and tyrosine 1235. At threonine 1289 the chain carries Phosphothreonine. The tract at residues 1320–1359 (WHPKAEQRPSFAELVSRISAIFSAFIGEHYVHVNATYVNV) is interaction with MUC20. Phosphotyrosine; by autocatalysis occurs at positions 1349 and 1356. Phosphotyrosine is present on tyrosine 1365.

It belongs to the protein kinase superfamily. Tyr protein kinase family. Heterodimer made of an alpha chain (50 kDa) and a beta chain (145 kDa) which are disulfide linked. Binds PLXNB1. Interacts when phosphorylated with downstream effectors including STAT3, PIK3R1, SRC, PCLG1, GRB2 and GAB1. Interacts with SPSB1, SPSB2 and SPSB4. Interacts with INPP5D/SHIP1. When phosphorylated at Tyr-1356, interacts with INPPL1/SHIP2. Interacts with RANBP9 and RANBP10, as well as SPSB1, SPSB2, SPSB3 and SPSB4. SPSB1 binding occurs in the presence and in the absence of HGF, however HGF treatment has a positive effect on this interaction. Interacts with MUC20; prevents interaction with GRB2 and suppresses hepatocyte growth factor-induced cell proliferation. Interacts with GRB10. Interacts with PTPN1 and PTPN2. Interacts with HSP90AA1 and HSP90AB1; the interaction suppresses MET kinase activity. Interacts with tensin TNS3. Interacts (when phosphorylated) with tensin TNS4 (via SH2 domain); the interaction increases MET protein stability by inhibiting MET endocytosis and subsequent lysosomal degradation. Autophosphorylated in response to ligand binding on Tyr-1234 and Tyr-1235 in the kinase domain leading to further phosphorylation of Tyr-1349 and Tyr-1356 in the C-terminal multifunctional docking site. Dephosphorylated by PTPRJ at Tyr-1349 and Tyr-1365. Dephosphorylated by PTPN1 and PTPN2. In terms of processing, ubiquitinated. Ubiquitination by CBL regulates the receptor stability and activity through proteasomal degradation. Post-translationally, O-mannosylation of IPT/TIG domains by TMEM260 is required for protein maturation. O-mannosylated residues are composed of single mannose glycans that are not elongated or modified.

Its subcellular location is the membrane. The enzyme catalyses L-tyrosyl-[protein] + ATP = O-phospho-L-tyrosyl-[protein] + ADP + H(+). With respect to regulation, in its inactive state, the C-terminal tail interacts with the catalytic domain and inhibits the kinase activity. Upon ligand binding, the C-terminal tail is displaced and becomes phosphorylated, thus increasing the kinase activity. Its function is as follows. Receptor tyrosine kinase that transduces signals from the extracellular matrix into the cytoplasm by binding to hepatocyte growth factor/HGF ligand. Regulates many physiological processes including proliferation, scattering, morphogenesis and survival. Ligand binding at the cell surface induces autophosphorylation of MET on its intracellular domain that provides docking sites for downstream signaling molecules. Following activation by ligand, interacts with the PI3-kinase subunit PIK3R1, PLCG1, SRC, GRB2, STAT3 or the adapter GAB1. Recruitment of these downstream effectors by MET leads to the activation of several signaling cascades including the RAS-ERK, PI3 kinase-AKT, or PLCgamma-PKC. The RAS-ERK activation is associated with the morphogenetic effects while PI3K/AKT coordinates prosurvival effects. During embryonic development, MET signaling plays a role in gastrulation, development and migration of muscles and neuronal precursors, angiogenesis and kidney formation. In adults, participates in wound healing as well as organ regeneration and tissue remodeling. Also promotes differentiation and proliferation of hematopoietic cells. This Rhinolophus ferrumequinum (Greater horseshoe bat) protein is Hepatocyte growth factor receptor (MET).